The primary structure comprises 576 residues: Mitogen-activated protein kinase 15 (576 aa).

The segment at 20–50 is disordered; sequence RPSSSSSSNNHDQIQNPPTVSNPNDDEDLKK. The segment covering 28 to 42 has biased composition (polar residues); it reads NNHDQIQNPPTVSNP. Residues 90 to 381 form the Protein kinase domain; it reads YQIQEVVGKG…AEEALADPYF (292 aa). Residues 96–104 and Lys-119 each bind ATP; that span reads VGKGSYGVV. The active-site Proton acceptor is Asp-216. Position 252 is a phosphothreonine (Thr-252). The TXY motif lies at 252–254; it reads TDY. A Phosphotyrosine modification is found at Tyr-254. Thr-257 is subject to Phosphothreonine. Residues 458–535 are disordered; sequence EENQGPGGRS…GGGYSARNLM (78 aa). Residues 477-501 show a composition bias toward basic and acidic residues; sequence LPRERVPASKNETVEERSNDIERRT. A compositionally biased stretch (polar residues) spans 504-520; sequence AVASTLDSPKASQQAEG.

It belongs to the protein kinase superfamily. CMGC Ser/Thr protein kinase family. MAP kinase subfamily. As to quaternary structure, interacts with MKK7. Dually phosphorylated on Thr-252 and Tyr-254, which activates the enzyme.

The enzyme catalyses L-seryl-[protein] + ATP = O-phospho-L-seryl-[protein] + ADP + H(+). It carries out the reaction L-threonyl-[protein] + ATP = O-phospho-L-threonyl-[protein] + ADP + H(+). Its activity is regulated as follows. Activated by threonine and tyrosine phosphorylation. The sequence is that of Mitogen-activated protein kinase 15 (MPK15) from Arabidopsis thaliana (Mouse-ear cress).